The following is an 81-amino-acid chain: ATP synthase subunit c, chloroplastic (81 aa).

Helical transmembrane passes span 3–23 (PLIS…ASIG) and 57–77 (LAFM…LLFA).

The protein belongs to the ATPase C chain family. F-type ATPases have 2 components, F(1) - the catalytic core - and F(0) - the membrane proton channel. F(1) has five subunits: alpha(3), beta(3), gamma(1), delta(1), epsilon(1). F(0) has four main subunits: a(1), b(1), b'(1) and c(10-14). The alpha and beta chains form an alternating ring which encloses part of the gamma chain. F(1) is attached to F(0) by a central stalk formed by the gamma and epsilon chains, while a peripheral stalk is formed by the delta, b and b' chains.

The protein localises to the plastid. Its subcellular location is the chloroplast thylakoid membrane. Functionally, f(1)F(0) ATP synthase produces ATP from ADP in the presence of a proton or sodium gradient. F-type ATPases consist of two structural domains, F(1) containing the extramembraneous catalytic core and F(0) containing the membrane proton channel, linked together by a central stalk and a peripheral stalk. During catalysis, ATP synthesis in the catalytic domain of F(1) is coupled via a rotary mechanism of the central stalk subunits to proton translocation. Its function is as follows. Key component of the F(0) channel; it plays a direct role in translocation across the membrane. A homomeric c-ring of between 10-14 subunits forms the central stalk rotor element with the F(1) delta and epsilon subunits. The polypeptide is ATP synthase subunit c, chloroplastic (Acorus calamus var. americanus (American sweet flag)).